The chain runs to 499 residues: Probable aspartyl protease At4g16563 (499 aa).

Residues 1–26 (MKTCLIFFLYTTILQYYFHFSVSSLS) form the signal peptide. Residues 83-487 (YLISLSVGSS…DLLNRRVGFA (405 aa)) form the Peptidase A1 domain. Residue D101 is part of the active site. C111 and C119 are joined by a disulfide. Residues N175 and N211 are each glycosylated (N-linked (GlcNAc...) asparagine). D353 is a catalytic residue. C396 and C445 are oxidised to a cystine. 2 N-linked (GlcNAc...) asparagine glycosylation sites follow: N400 and N415.

The protein belongs to the peptidase A1 family.

This chain is Probable aspartyl protease At4g16563, found in Arabidopsis thaliana (Mouse-ear cress).